The following is an 855-amino-acid chain: Pentatricopeptide repeat-containing protein At1g74750 (855 aa).

The segment at 21–40 (GSRPSAADGNSCTCAEDESG) is disordered. 8 PPR repeats span residues 358-392 (DGHTYTTMVGNLGRAKQFGEINKLLDEMVRDGCKP), 393-427 (NTVTYNRLIHSYGRANYLKEAMNVFNQMQEAGCEP), 428-462 (DRVTYCTLIDIHAKAGFLDIAMDMYQRMQEAGLSP), 463-497 (DTFTYSVIINCLGKAGHLPAAHRLFCEMVGQGCTP), 498-532 (NLVTFNIMIALHAKARNYETALKLYRDMQNAGFQP), 533-567 (DKVTYSIVMEVLGHCGFLEEAEGVFAEMQRKNWVP), 568-602 (DEPVYGLLVDLWGKAGNVDKAWQWYQAMLQAGLRP), and 603-637 (NVPTCNSLLSTFLRVHRMSEAYNLLQSMLALGLHP). A Smr domain is found at 755–838 (INLHVMSEGT…NSGCFVGSGE (84 aa)).

Belongs to the PPR family. P subfamily.

This is Pentatricopeptide repeat-containing protein At1g74750 from Arabidopsis thaliana (Mouse-ear cress).